Reading from the N-terminus, the 516-residue chain is 2-isopropylmalate synthase (516 aa).

The 263-residue stretch at 5 to 267 folds into the Pyruvate carboxyltransferase domain; the sequence is IIIFDTTLRD…STDINIKEIH (263 aa). Mn(2+)-binding residues include Asp-14, His-202, His-204, and Asn-238. Residues 393–516 form a regulatory domain region; sequence KLEYFDVQSK…VNKELERLQK (124 aa).

It belongs to the alpha-IPM synthase/homocitrate synthase family. LeuA type 1 subfamily. Homodimer. Mn(2+) serves as cofactor.

The protein resides in the cytoplasm. It carries out the reaction 3-methyl-2-oxobutanoate + acetyl-CoA + H2O = (2S)-2-isopropylmalate + CoA + H(+). The protein operates within amino-acid biosynthesis; L-leucine biosynthesis; L-leucine from 3-methyl-2-oxobutanoate: step 1/4. Its function is as follows. Catalyzes the condensation of the acetyl group of acetyl-CoA with 3-methyl-2-oxobutanoate (2-ketoisovalerate) to form 3-carboxy-3-hydroxy-4-methylpentanoate (2-isopropylmalate). The sequence is that of 2-isopropylmalate synthase from Buchnera aphidicola subsp. Cinara cedri (strain Cc).